The chain runs to 194 residues: UPF0232 protein MSMEG_0004/MSMEI_0006 (194 aa).

Over residues 1–14 the composition is skewed to acidic residues; that stretch reads MTGPFDDDGPEEDA. The segment at 1 to 81 is disordered; that stretch reads MTGPFDDDGP…GPGPDARDPQ (81 aa). Positions 30-52 are enriched in basic and acidic residues; that stretch reads DLVRRTLEEARGAARSQGKDVGR.

It belongs to the UPF0232 family.

The protein is UPF0232 protein MSMEG_0004/MSMEI_0006 of Mycolicibacterium smegmatis (strain ATCC 700084 / mc(2)155) (Mycobacterium smegmatis).